Reading from the N-terminus, the 229-residue chain is uncharacterized protein (229 aa).

A disordered region spans residues 1 to 41 (MRSAKVGVARQLETKKPQTGRKISTSSRGTIHSQQSQPEDI). Residues 21–39 (RKISTSSRGTIHSQQSQPE) show a composition bias toward polar residues. 4 consecutive EF-hand domains span residues 48–83 (KELK…IGLH), 84–119 (ANKA…SQNI), 123–158 (TNEE…FGDF), and 159–193 (DDEL…YLLN). Residues Asp-61, Asp-63, Ser-65, Glu-72, Asp-97, Asp-99, Asn-101, Glu-103, Glu-108, Asp-136, Asp-138, Asn-140, and Glu-147 each coordinate Ca(2+). Over residues 194 to 217 (DPKHDIDTGDSDVERYDDRHDDRA) the composition is skewed to basic and acidic residues. The segment at 194–229 (DPKHDIDTGDSDVERYDDRHDDRASPMPNHLSTVPE) is disordered.

This is an uncharacterized protein from Caenorhabditis elegans.